The following is an 800-amino-acid chain: MLISNEWLKEYVTIDDSVSNLAERITRTGIEVDDLIDYTKDIKNLVVGFVKSKEKHPDADKLNVCQVDIGEDEPVQIVCGAPNVDAGQYVIVAKVGGRLPGGIKIKRAKLRGERSEGMICSLQEIGISSNYIPKSFESGIYVFSEAQVPGTDALQALYLDDQVMEFDLTPNRADALSMIGTAYEVAALYNTKMTKPETTSNELDLSANDELTVTIENEDKVPYYSARVVHDVTIEPSPIWMQARLIKAGIRPINNVVDISNYVLLEYGQPLHMFDQDAIGSQQIVVRQANEGEKMTTLDDTERELLTSDIVITNGQTPIALAGVMGGDFSEVKEQTSNIVIEGAIFDPVSIRHTSRRLNLRSESSSRFEKGIATEFVDEAVDRACYLLQTYANGKVLKDRVSSGELGAFITPIDITADKINRTIGFDLSQNDIVTIFNQLGFDTEINDDVITVLVPSRRKDITIKEDLIEEVARIYGYDDIPSTLPVFDKVTSGQLTDRQYKTRMVKEVLEGAGLDQAITYSLVSKEDATAFSMQQRQTIDLLMPMSEAHASLRQSLLPHLIEAASYNVARKNKDVKLFEIGNVFFANGEGELPDQVEYLSGILTGDYVVNQWQGKKETVDFYLAKGVVDRVSEKLNLEFSYRRADIDGLHPGRTAEILLENKVVGFIGELHPILAADNDLKRTYVFELNFDALMAVSVGYINYQPIPRFPGMSRDIALEVDQNIPAADLLSTIHAHGGNILKDTLVFDVYQGEHLEKGKKSIAIRLNYLDTEETLTDERVSKVQAEIEAALIEQGAVIR.

Residues Thr39–Leu154 enclose the tRNA-binding domain. The region spanning Ala408 to Ser483 is the B5 domain. Residues Asp461, Asp467, Glu470, and Glu471 each contribute to the Mg(2+) site. In terms of domain architecture, FDX-ACB spans Pro708–Arg800.

Belongs to the phenylalanyl-tRNA synthetase beta subunit family. Type 1 subfamily. As to quaternary structure, tetramer of two alpha and two beta subunits. Requires Mg(2+) as cofactor.

The protein localises to the cytoplasm. It catalyses the reaction tRNA(Phe) + L-phenylalanine + ATP = L-phenylalanyl-tRNA(Phe) + AMP + diphosphate + H(+). The sequence is that of Phenylalanine--tRNA ligase beta subunit from Staphylococcus aureus (strain COL).